The following is a 585-amino-acid chain: Formate--tetrahydrofolate ligase (585 aa).

74-81 (TPLGEGKT) is an ATP binding site.

It belongs to the formate--tetrahydrofolate ligase family.

It carries out the reaction (6S)-5,6,7,8-tetrahydrofolate + formate + ATP = (6R)-10-formyltetrahydrofolate + ADP + phosphate. It participates in one-carbon metabolism; tetrahydrofolate interconversion. The polypeptide is Formate--tetrahydrofolate ligase (Yersinia enterocolitica serotype O:8 / biotype 1B (strain NCTC 13174 / 8081)).